The chain runs to 302 residues: F-box protein At1g20360 (302 aa).

Positions 1–48 (MNSLPLHLLDQILFRLEPKSLAMMKSTNRTINSHISDPLFESEYFSRL) constitute an F-box domain.

The chain is F-box protein At1g20360 from Arabidopsis thaliana (Mouse-ear cress).